Reading from the N-terminus, the 443-residue chain is EGF-containing fibulin-like extracellular matrix protein 2 (443 aa).

The N-terminal stretch at Met1–Pro27 is a signal peptide. Position 28 is a pyrrolidone carboxylic acid (Gln28). In terms of domain architecture, EGF-like 1; atypical spans Tyr36–Leu81. Intrachain disulfides connect Cys58–Cys121, Cys65–Cys80, Cys71–Cys109, Cys127–Cys140, Cys134–Cys149, Cys151–Cys162, Cys168–Cys177, Cys173–Cys186, Cys188–Cys201, Cys207–Cys217, Cys213–Cys226, Cys228–Cys241, Cys247–Cys258, Cys254–Cys267, Cys269–Cys281, Cys287–Cys300, Cys294–Cys309, and Cys315–Cys327. The segment at Leu91 to Glu117 is disordered. The 41-residue stretch at Asp123–Val163 folds into the EGF-like 2; calcium-binding domain. The EGF-like 3; calcium-binding domain maps to Asp164–Val202. Asn198 is a glycosylation site (N-linked (GlcNAc...) asparagine). The EGF-like 4; calcium-binding domain occupies Asp203–Ser242. The EGF-like 5; calcium-binding domain occupies Asp243–Gln282. The 46-residue stretch at Asp283–Leu328 folds into the EGF-like 6; calcium-binding domain. A glycan (N-linked (GlcNAc...) asparagine) is linked at Asn394.

Belongs to the fibulin family. As to quaternary structure, homodimer; disulfide-linked. Multimer; allows heparin binding. Monomer. Binds preferentially to p53 mutants. Interacts with FBN1 (via N-terminal domain); this interaction inhibits EFEMP2 binding to LOX and ELN. Interacts with ELN with moderate affinity; this interaction regulates ELN self-assembly maturation stage. Interacts with PCOLCE. Interacts with collagen type IV trimer (COL4A1-COL4A1-COL4A2), NID2 and moderately with COL15A1-derived endostatin. Interacts with EMILIN1; this interaction promotes the incorporation of EFEMP2 into the extracellular matrix. Interacts with LTBP4; the LTBP4 long form (LTBP4L) has a stronger binding affinity than the LTBP4 short form and the LTBP4 long form promotes fibrillar deposition of EFEMP2. Interacts with LOX (via propeptide); this interaction is strong and facilitates formation of ternary complexes with ELN during elastic fiber assembly; this interaction limits interaction of EFEMP2 with FBLN5. Interacts with PITX2. Interacts with FBLN5 with moderate affinity. Interacts with LOXL1 (via propeptide), LTBP1 and TGFB1 stronger than with LOXL2 and LTBP3. In terms of processing, N-glycosylated; contains mostly complex-type glycans. Not O-glycosylated. Cleaved by ELANE; produces a 50-55 kDa fragment. Cleaved by MMP2 and MMP9; produces several fragments. As to expression, expressed in elastic fibers of the skin, near the dermal-epidermal junction, surrounding the hair follicles and throughout the dermis. Expressed in tendon around tenocytes. Prominently expressed in cartilage, bone, perichondrium and ligaments. Also detected in bone marrow stroma. Expressed in aorta, lung, and esophagus.

Its subcellular location is the secreted. It is found in the extracellular space. The protein localises to the extracellular matrix. It localises to the basement membrane. In terms of biological role, plays a crucial role in elastic fiber formation in tissue, and in the formation of ultrastructural connections between elastic laminae and smooth muscle cells in the aorta, therefore participates in terminal differentiation and maturation of smooth muscle cell (SMC) and in the mechanical properties and wall integrity maintenance of the aorta. In addition, is involved in the control of collagen fibril assembly in tissue throught proteolytic activation of LOX leading to cross- linking of collagen and elastin. Also promotes ELN coacervation and participates in the deposition of ELN coacervates on to microfibrils but also regulates ELN cross- linking through LOX interaction. Moreover adheres to the cells through heparin binding in a calcium-dependent manner and regulates vascularlar smooth muscle cells proliferation through angiotensin signaling. This Mus musculus (Mouse) protein is EGF-containing fibulin-like extracellular matrix protein 2.